The primary structure comprises 705 residues: Ribosomal RNA large subunit methyltransferase K/L (705 aa).

One can recognise a THUMP domain in the interval 43-154 (LLYQSLLWSR…RDTASVALDL (112 aa)).

This sequence belongs to the methyltransferase superfamily. RlmKL family.

The protein resides in the cytoplasm. It carries out the reaction guanosine(2445) in 23S rRNA + S-adenosyl-L-methionine = N(2)-methylguanosine(2445) in 23S rRNA + S-adenosyl-L-homocysteine + H(+). It catalyses the reaction guanosine(2069) in 23S rRNA + S-adenosyl-L-methionine = N(2)-methylguanosine(2069) in 23S rRNA + S-adenosyl-L-homocysteine + H(+). Its function is as follows. Specifically methylates the guanine in position 2445 (m2G2445) and the guanine in position 2069 (m7G2069) of 23S rRNA. This is Ribosomal RNA large subunit methyltransferase K/L from Pectobacterium atrosepticum (strain SCRI 1043 / ATCC BAA-672) (Erwinia carotovora subsp. atroseptica).